The following is a 623-amino-acid chain: Chaperone protein DnaK (623 aa).

Phosphothreonine; by autocatalysis is present on Thr-175. The interval 578 to 623 (ANPEGAPGAGFDPNNMGGANAGNASAGNDKKDDNVVDADFKVEDDK) is disordered. Residues 591-604 (NNMGGANAGNASAG) are compositionally biased toward low complexity. A compositionally biased stretch (basic and acidic residues) spans 605-623 (NDKKDDNVVDADFKVEDDK).

This sequence belongs to the heat shock protein 70 family.

Functionally, acts as a chaperone. The sequence is that of Chaperone protein DnaK from Clostridium botulinum (strain 657 / Type Ba4).